The sequence spans 82 residues: QTGKDATIVELTNDNDGLGQYNFAYRTSDGIARQEQGALKNAGSENEALEVQGSYTYKGVDGKDYTVTFVANENGYQPRVQS.

Residue Gln-1 is modified to Pyrrolidone carboxylic acid. The region spanning 18 to 82 (LGQYNFAYRT…ENGYQPRVQS (65 aa)) is the Chitin-binding type R&amp;R domain.

Component of the soft endocuticle of migratory locust. In Locusta migratoria (Migratory locust), this protein is Endocuticle structural glycoprotein ABD-5.